Here is a 630-residue protein sequence, read N- to C-terminus: tRNA uridine 5-carboxymethylaminomethyl modification enzyme MnmG (630 aa).

13 to 18 (GGGHAG) is a binding site for FAD. 273 to 287 (GPRYCPSIEDKIHRF) contributes to the NAD(+) binding site.

Belongs to the MnmG family. In terms of assembly, homodimer. Heterotetramer of two MnmE and two MnmG subunits. FAD is required as a cofactor.

It is found in the cytoplasm. Its function is as follows. NAD-binding protein involved in the addition of a carboxymethylaminomethyl (cmnm) group at the wobble position (U34) of certain tRNAs, forming tRNA-cmnm(5)s(2)U34. This Pseudomonas aeruginosa (strain ATCC 15692 / DSM 22644 / CIP 104116 / JCM 14847 / LMG 12228 / 1C / PRS 101 / PAO1) protein is tRNA uridine 5-carboxymethylaminomethyl modification enzyme MnmG.